The primary structure comprises 287 residues: ATP synthase gamma chain (287 aa).

The protein belongs to the ATPase gamma chain family. F-type ATPases have 2 components, CF(1) - the catalytic core - and CF(0) - the membrane proton channel. CF(1) has five subunits: alpha(3), beta(3), gamma(1), delta(1), epsilon(1). CF(0) has three main subunits: a, b and c.

Its subcellular location is the cell inner membrane. Its function is as follows. Produces ATP from ADP in the presence of a proton gradient across the membrane. The gamma chain is believed to be important in regulating ATPase activity and the flow of protons through the CF(0) complex. The sequence is that of ATP synthase gamma chain from Enterobacter sp. (strain 638).